A 163-amino-acid polypeptide reads, in one-letter code: MLKRSSWLATLLGLLTVASVSTIVYAIELDEATRTVPLESSGRTVVLTPEQVKRGKRLFNNSCAICHNGGITKTNPNVGLDPESLGLATPQRDNIEALVDYMKDPTSYDGAESIAELHPSIKSAEIFPKMRNLTDEDLFTIAGHILLQPKIVSEKWGGGKIYY.

The signal sequence occupies residues 1–26; sequence MLKRSSWLATLLGLLTVASVSTIVYA. Heme c-binding residues include C63, C66, H67, and H118.

The protein belongs to the cytochrome c family. PsbV subfamily. As to quaternary structure, PSII is composed of 1 copy each of membrane proteins PsbA, PsbB, PsbC, PsbD, PsbE, PsbF, PsbH, PsbI, PsbJ, PsbK, PsbL, PsbM, PsbT, PsbY, PsbZ, Psb30/Ycf12, at least 3 peripheral proteins of the oxygen-evolving complex and a large number of cofactors. It forms dimeric complexes. The extrinsic subunits in red algae are PsbO (OEC33), PsbQ', cytochrome c-550 and PsbU. The cofactor is heme c.

The protein localises to the plastid. It localises to the chloroplast thylakoid membrane. Its function is as follows. One of the extrinsic, lumenal subunits of photosystem II (PSII). PSII is a light-driven water plastoquinone oxidoreductase, using light energy to abstract electrons from H(2)O, generating a proton gradient subsequently used for ATP formation. The extrinsic proteins stabilize the structure of photosystem II oxygen-evolving complex (OEC), the ion environment of oxygen evolution and protect the OEC against heat-induced inactivation. The polypeptide is Photosystem II extrinsic protein V (Porphyra purpurea (Red seaweed)).